The sequence spans 454 residues: Noelin-2 (454 aa).

An N-terminal signal peptide occupies residues 1–20 (MWPLTVPPPLLLLLCSGLAG). Coiled coils occupy residues 58–85 (RDGRSRELRQLMEKVQNVSQSMEVLELR) and 136–193 (LEQY…AQKL). N74, N155, N275, N310, N399, and N441 each carry an N-linked (GlcNAc...) asparagine glycan. One can recognise an Olfactomedin-like domain in the interval 194-446 (GCGKLTGVSN…QVLYNVTLFH (253 aa)). The cysteines at positions 195 and 377 are disulfide-linked.

As to quaternary structure, peripherally associated with AMPAR complex. AMPAR complex consists of an inner core made of 4 pore-forming GluA/GRIA proteins (GRIA1, GRIA2, GRIA3 and GRIA4) and 4 major auxiliary subunits arranged in a twofold symmetry. One of the two pairs of distinct binding sites is occupied either by CNIH2, CNIH3 or CACNG2, CACNG3. The other harbors CACNG2, CACNG3, CACNG4, CACNG8 or GSG1L. This inner core of AMPAR complex is complemented by outer core constituents binding directly to the GluA/GRIA proteins at sites distinct from the interaction sites of the inner core constituents. Outer core constituents include at least PRRT1, PRRT2, CKAMP44/SHISA9, FRRS1L and NRN1. The proteins of the inner and outer core serve as a platform for other, more peripherally associated AMPAR constituents, including OLFM2. Alone or in combination, these auxiliary subunits control the gating and pharmacology of the AMPAR complex and profoundly impact their biogenesis and protein processing. Interacts with GRIA2. Interacts with OLFM1 and OLFM3. Interacts with SRF; the interaction promotes dissociation of SRF from the transcriptional repressor HEY2. Interacts with RUNX2. Post-translationally, N-glycosylated. In terms of tissue distribution, expressed in aortic smooth muscle (at protein level). In the fetus, expressed in the brain and ocular tissues including lens vesicle and optic cup.

It localises to the secreted. Its subcellular location is the synapse. It is found in the membrane. The protein resides in the nucleus. The protein localises to the cytoplasm. In terms of biological role, involved in transforming growth factor beta (TGF-beta)-induced smooth muscle differentiation. TGF-beta induces expression and translocation of OLFM2 to the nucleus where it binds to SRF, causing its dissociation from the transcriptional repressor HEY2/HERP1 and facilitating binding of SRF to target genes. Plays a role in AMPAR complex organization. Is a regulator of vascular smooth-muscle cell (SMC) phenotypic switching, that acts by promoting RUNX2 and inhibiting MYOCD binding to SRF. SMC phenotypic switching is the process through which vascular SMCs undergo transition between a quiescent contractile phenotype and a proliferative synthetic phenotype in response to pathological stimuli. SMC phenotypic plasticity is essential for vascular development and remodeling. The polypeptide is Noelin-2 (OLFM2) (Homo sapiens (Human)).